Reading from the N-terminus, the 475-residue chain is Glycogen synthase (475 aa).

Lys-15 is an ADP-alpha-D-glucose binding site.

This sequence belongs to the glycosyltransferase 1 family. Bacterial/plant glycogen synthase subfamily.

The catalysed reaction is [(1-&gt;4)-alpha-D-glucosyl](n) + ADP-alpha-D-glucose = [(1-&gt;4)-alpha-D-glucosyl](n+1) + ADP + H(+). It participates in glycan biosynthesis; glycogen biosynthesis. Synthesizes alpha-1,4-glucan chains using ADP-glucose. This Anaeromyxobacter sp. (strain Fw109-5) protein is Glycogen synthase.